Consider the following 638-residue polypeptide: 1-deoxy-D-xylulose-5-phosphate synthase (638 aa).

Thiamine diphosphate-binding positions include histidine 79 and 120–122; that span reads AHS. Aspartate 151 contributes to the Mg(2+) binding site. Thiamine diphosphate-binding positions include 152–153, asparagine 180, tyrosine 289, and glutamate 371; that span reads GA. Residue asparagine 180 coordinates Mg(2+).

Belongs to the transketolase family. DXPS subfamily. Homodimer. Mg(2+) serves as cofactor. The cofactor is thiamine diphosphate.

It carries out the reaction D-glyceraldehyde 3-phosphate + pyruvate + H(+) = 1-deoxy-D-xylulose 5-phosphate + CO2. It functions in the pathway metabolic intermediate biosynthesis; 1-deoxy-D-xylulose 5-phosphate biosynthesis; 1-deoxy-D-xylulose 5-phosphate from D-glyceraldehyde 3-phosphate and pyruvate: step 1/1. Its function is as follows. Catalyzes the acyloin condensation reaction between C atoms 2 and 3 of pyruvate and glyceraldehyde 3-phosphate to yield 1-deoxy-D-xylulose-5-phosphate (DXP). This Rhizobium etli (strain CIAT 652) protein is 1-deoxy-D-xylulose-5-phosphate synthase.